Here is a 90-residue protein sequence, read N- to C-terminus: Probable Fe(2+)-trafficking protein (90 aa).

Belongs to the Fe(2+)-trafficking protein family.

Could be a mediator in iron transactions between iron acquisition and iron-requiring processes, such as synthesis and/or repair of Fe-S clusters in biosynthetic enzymes. In Colwellia psychrerythraea (strain 34H / ATCC BAA-681) (Vibrio psychroerythus), this protein is Probable Fe(2+)-trafficking protein.